The primary structure comprises 462 residues: Fumarate hydratase class II (462 aa).

Substrate contacts are provided by residues Ser97–Thr99, His128–Asp131, Ser138–Asn140, and Thr186. The active-site Proton donor/acceptor is the His187. Ser317 is an active-site residue. Substrate is bound by residues Ser318 and Lys323–Asn325.

This sequence belongs to the class-II fumarase/aspartase family. Fumarase subfamily. As to quaternary structure, homotetramer.

The protein localises to the cytoplasm. The enzyme catalyses (S)-malate = fumarate + H2O. It participates in carbohydrate metabolism; tricarboxylic acid cycle; (S)-malate from fumarate: step 1/1. Involved in the TCA cycle. Catalyzes the stereospecific interconversion of fumarate to L-malate. The chain is Fumarate hydratase class II from Neisseria meningitidis serogroup A / serotype 4A (strain DSM 15465 / Z2491).